The sequence spans 362 residues: MNIKSLLLGSAAALVAASGAQAADAIVAPEPEAVEYVRVCDAYGAGYFYIPGTETCLRVHGYVRYDVKGGDDVYSGTDRNGWDKSARFALRVSTGSETELGTLKTFTELRFNYAANNSGVDGKYGNETSSGTVMEFAYIQLGGLRVGIDESEFHTFTGYLGDVINDDVISAGSYRTGKISYTFTGGNGFSAVIALEQGGDNDGGYTGTTNYHIDGYMPDVVGGLKYAGGWGSIAGVVAYDSVIEEWAAKVRGDVNITDQFSVWLQGAYSSAATPNQNYGQWGGDWAVWGGAKFIATEKATFNLQAAHDDWGKTAVTANVAYELVPGFTVAPEVSYTKFGGEWKNTVAEDNAWGGIVRFQRSF.

Positions 1–22 (MNIKSLLLGSAAALVAASGAQA) are cleaved as a signal peptide.

It belongs to the alphaproteobacteria porin family. In terms of assembly, homotrimer.

The protein localises to the cell outer membrane. Functionally, forms passive diffusion pores that allow small molecular weight hydrophilic materials across the outer membrane. The polypeptide is Porin Omp2b (omp2b) (Brucella neotomae).